The chain runs to 117 residues: Mitochondrial import inner membrane translocase subunit Tim10B (117 aa).

Residues 22–46 carry the Twin CX3C motif motif; sequence CFSRCVDNLSQRDLGGHEDLCVDRC. 2 disulfide bridges follow: Cys-22/Cys-46 and Cys-26/Cys-42. Residues 75-97 show a composition bias toward basic and acidic residues; sequence EMEENARKAEQQQREQEKERLKE. Positions 75-117 are disordered; the sequence is EMEENARKAEQQQREQEKERLKEAAATAVLTPVQPPVAGNLSM.

It belongs to the small Tim family. As to quaternary structure, component of the TIM22 complex, whose core is composed of Tim22, associated with peripheral protein Tim9b/Tim10b and the 70 kDa heterohexamer. In most cases, the 70 kDa complex is composed of TIMM9 and TIMM10.

It localises to the mitochondrion inner membrane. In terms of biological role, component of the TIM22 complex, a complex that mediates the import and insertion of multi-pass transmembrane proteins into the mitochondrial inner membrane. The TIM22 complex forms a twin-pore translocase that uses the membrane potential as the external driving force. In the TIM22 complex, it may act as a docking point for the soluble 70 kDa complex that guides the target proteins in transit through the aqueous mitochondrial intermembrane space. This is Mitochondrial import inner membrane translocase subunit Tim10B (Tim9b) from Drosophila melanogaster (Fruit fly).